A 231-amino-acid polypeptide reads, in one-letter code: NADH-ubiquinone oxidoreductase chain 4 (231 aa).

6 helical membrane-spanning segments follow: residues Pro-1–Ile-21, Met-34–Leu-54, Ser-61–Ile-80, Gly-85–Ala-107, Ile-128–Pro-148, and Thr-169–Leu-189.

This sequence belongs to the complex I subunit 4 family.

Its subcellular location is the mitochondrion membrane. The catalysed reaction is a ubiquinone + NADH + 5 H(+)(in) = a ubiquinol + NAD(+) + 4 H(+)(out). Its function is as follows. Core subunit of the mitochondrial membrane respiratory chain NADH dehydrogenase (Complex I) that is believed to belong to the minimal assembly required for catalysis. Complex I functions in the transfer of electrons from NADH to the respiratory chain. The immediate electron acceptor for the enzyme is believed to be ubiquinone. This is NADH-ubiquinone oxidoreductase chain 4 (MT-ND4) from Gloydius blomhoffii (Mamushi).